We begin with the raw amino-acid sequence, 134 residues long: ATP synthase epsilon chain, chloroplastic (134 aa).

Belongs to the ATPase epsilon chain family. As to quaternary structure, F-type ATPases have 2 components, CF(1) - the catalytic core - and CF(0) - the membrane proton channel. CF(1) has five subunits: alpha(3), beta(3), gamma(1), delta(1), epsilon(1). CF(0) has three main subunits: a, b and c.

It localises to the plastid. Its subcellular location is the chloroplast thylakoid membrane. Produces ATP from ADP in the presence of a proton gradient across the membrane. The protein is ATP synthase epsilon chain, chloroplastic of Nymphaea alba (White water-lily).